The following is a 93-amino-acid chain: Integration host factor subunit beta (93 aa).

The protein belongs to the bacterial histone-like protein family. As to quaternary structure, heterodimer of an alpha and a beta chain.

Its function is as follows. This protein is one of the two subunits of integration host factor, a specific DNA-binding protein that functions in genetic recombination as well as in transcriptional and translational control. This is Integration host factor subunit beta (ihfB) from Mannheimia haemolytica (Pasteurella haemolytica).